Here is a 407-residue protein sequence, read N- to C-terminus: Peptidase T (407 aa).

Residue His-82 participates in Zn(2+) binding. Residue Asp-84 is part of the active site. Asp-143 lines the Zn(2+) pocket. Glu-177 functions as the Proton acceptor in the catalytic mechanism. Residues Glu-178, Asp-200, and His-382 each coordinate Zn(2+).

It belongs to the peptidase M20B family. It depends on Zn(2+) as a cofactor.

The protein localises to the cytoplasm. It catalyses the reaction Release of the N-terminal residue from a tripeptide.. Cleaves the N-terminal amino acid of tripeptides. The polypeptide is Peptidase T (Streptococcus pyogenes serotype M18 (strain MGAS8232)).